Here is a 93-residue protein sequence, read N- to C-terminus: FMRFamide-like neuropeptides 22 (93 aa).

The signal sequence occupies residues 1-19; it reads MNRSMIALCVVLMVSLVSA. A propeptide spanning residues 20-46 is cleaved from the precursor; that stretch reads QVFDLDGQQLAGLEQNDARLMEQQVKR. 3 positions are modified to phenylalanine amide: Phe-55, Phe-67, and Phe-79. A propeptide spanning residues 83–93 is cleaved from the precursor; sequence SGAEAVSEQDY.

Belongs to the FARP (FMRFamide related peptide) family.

The protein localises to the secreted. FMRFamides and FMRFamide-like peptides are neuropeptides. In terms of biological role, SPSAKWMRF-amide: Acts as a ligand for the npr-22 receptor in vitro. The protein is FMRFamide-like neuropeptides 22 of Caenorhabditis elegans.